Reading from the N-terminus, the 163-residue chain is NADH-quinone oxidoreductase subunit I (163 aa).

4Fe-4S ferredoxin-type domains are found at residues 53–83 (LRRY…IEAG) and 94–123 (VRYD…EGPN). [4Fe-4S] cluster-binding residues include Cys63, Cys66, Cys69, Cys73, Cys103, Cys106, Cys109, and Cys113.

The protein belongs to the complex I 23 kDa subunit family. As to quaternary structure, NDH-1 is composed of 14 different subunits. Subunits NuoA, H, J, K, L, M, N constitute the membrane sector of the complex. [4Fe-4S] cluster serves as cofactor.

Its subcellular location is the cell inner membrane. It carries out the reaction a quinone + NADH + 5 H(+)(in) = a quinol + NAD(+) + 4 H(+)(out). Functionally, NDH-1 shuttles electrons from NADH, via FMN and iron-sulfur (Fe-S) centers, to quinones in the respiratory chain. The immediate electron acceptor for the enzyme in this species is believed to be ubiquinone. Couples the redox reaction to proton translocation (for every two electrons transferred, four hydrogen ions are translocated across the cytoplasmic membrane), and thus conserves the redox energy in a proton gradient. The protein is NADH-quinone oxidoreductase subunit I of Bartonella quintana (strain Toulouse) (Rochalimaea quintana).